The sequence spans 282 residues: Pantothenate synthetase (282 aa).

30–37 is a binding site for ATP; the sequence is MGNLHEGH. Residue His-37 is the Proton donor of the active site. Gln-61 lines the (R)-pantoate pocket. Gln-61 contacts beta-alanine. Residue 149–152 coordinates ATP; sequence GEKD. Gln-155 contributes to the (R)-pantoate binding site. ATP is bound by residues Val-178 and 186 to 189; that span reads KSSR.

The protein belongs to the pantothenate synthetase family. In terms of assembly, homodimer.

The protein localises to the cytoplasm. It carries out the reaction (R)-pantoate + beta-alanine + ATP = (R)-pantothenate + AMP + diphosphate + H(+). It participates in cofactor biosynthesis; (R)-pantothenate biosynthesis; (R)-pantothenate from (R)-pantoate and beta-alanine: step 1/1. Its function is as follows. Catalyzes the condensation of pantoate with beta-alanine in an ATP-dependent reaction via a pantoyl-adenylate intermediate. In Marinobacter nauticus (strain ATCC 700491 / DSM 11845 / VT8) (Marinobacter aquaeolei), this protein is Pantothenate synthetase.